An 840-amino-acid polypeptide reads, in one-letter code: Leucine--tRNA ligase (840 aa).

The short motif at proline 44 to histidine 55 is the 'HIGH' region element. Residues lysine 617–serine 621 carry the 'KMSKS' region motif. Residue lysine 620 participates in ATP binding.

Belongs to the class-I aminoacyl-tRNA synthetase family.

It is found in the cytoplasm. The enzyme catalyses tRNA(Leu) + L-leucine + ATP = L-leucyl-tRNA(Leu) + AMP + diphosphate. The chain is Leucine--tRNA ligase from Borrelia garinii subsp. bavariensis (strain ATCC BAA-2496 / DSM 23469 / PBi) (Borreliella bavariensis).